The chain runs to 640 residues: Fructose-1,6-bisphosphatase class 3 (640 aa).

This sequence belongs to the FBPase class 3 family. Requires Mn(2+) as cofactor.

The enzyme catalyses beta-D-fructose 1,6-bisphosphate + H2O = beta-D-fructose 6-phosphate + phosphate. It participates in carbohydrate biosynthesis; gluconeogenesis. The sequence is that of Fructose-1,6-bisphosphatase class 3 from Lactococcus lactis subsp. cremoris (strain MG1363).